The sequence spans 496 residues: UDP-glycosyltransferase 73C4 (496 aa).

UDP-alpha-D-glucose contacts are provided by residues Ser297, 357 to 359, 374 to 382, and 396 to 399; these read SPQ, HCGWNSTLE, and FGDQ. The disordered stretch occupies residues 450–475; that stretch reads SDDAKERRRRVKELGESAHKAVEEGG. Residues 451 to 472 are compositionally biased toward basic and acidic residues; sequence DDAKERRRRVKELGESAHKAVE.

This sequence belongs to the UDP-glycosyltransferase family.

The sequence is that of UDP-glycosyltransferase 73C4 (UGT73C4) from Arabidopsis thaliana (Mouse-ear cress).